Consider the following 194-residue polypeptide: Ion-translocating oxidoreductase complex subunit A (194 aa).

Helical transmembrane passes span 4-24 (LALI…QFLG), 39-59 (IGLS…SYIL), 71-91 (FLRT…TEML), 102-122 (VLGI…VALL), 135-155 (TTQG…FAAL), and 172-192 (AIGM…SGLI).

It belongs to the NqrDE/RnfAE family. The complex is composed of six subunits: RnfA, RnfB, RnfC, RnfD, RnfE and RnfG.

The protein resides in the cell inner membrane. Its function is as follows. Part of a membrane-bound complex that couples electron transfer with translocation of ions across the membrane. In Pseudomonas paraeruginosa (strain DSM 24068 / PA7) (Pseudomonas aeruginosa (strain PA7)), this protein is Ion-translocating oxidoreductase complex subunit A.